A 474-amino-acid chain; its full sequence is L-lactate permease (474 aa).

The next 11 membrane-spanning stretches (helical) occupy residues 4–21 (AILAIIPILWLILSLAVF), 28–48 (ACFIGLIITLLTSIIGFHFSI), 63–85 (FWPIIYIIVAAVFTYNLTTASGG), 105–127 (LILAWGFGGFLEAIAGFGTAVAI), 142–164 (AALICLIANTTPTAFGAIGLPVT), 177–199 (LSVIVSLQLFILIVAIPFVLVSL), 209–231 (GVFGITLASGLAFALPQILVSNY), 238–255 (SIIGSLFCILVTILFVNL), 281–303 (FILVFFFIMLTSSLFPAINQLLA), 324–346 (WLTSPGTMIILATFIAGLIQGMS), and 387–409 (IAVSLVAVTGGFYPFIAPVIGTL).

This sequence belongs to the lactate permease family.

The protein localises to the cell membrane. In terms of biological role, plays a role in L-lactate utilization. This is L-lactate permease (lctP) from Streptococcus iniae (Streptococcus shiloi).